The following is a 370-amino-acid chain: Gibberellin 2-beta-dioxygenase 2 (370 aa).

The region spanning 186–306 is the Fe2OG dioxygenase domain; the sequence is DNDSLIRINH…RLSTIYFAAP (121 aa). Tyr-196 lines the 2-oxoglutarate pocket. His-224, Asp-226, and His-287 together coordinate Fe cation. 2-oxoglutarate-binding residues include Arg-297 and Ser-299.

It belongs to the iron/ascorbate-dependent oxidoreductase family. GA2OX subfamily. Fe(2+) serves as cofactor.

It catalyses the reaction gibberellin A1 + 2-oxoglutarate + O2 = gibberellin A8 + succinate + CO2. In terms of biological role, catalyzes the 2-beta-hydroxylation of several biologically active gibberellins, leading to the homeostatic regulation of their endogenous level. Catabolism of gibberellins (GAs) plays a central role in plant development. In Oryza sativa subsp. japonica (Rice), this protein is Gibberellin 2-beta-dioxygenase 2.